The following is a 411-amino-acid chain: 2,3-bisphosphoglycerate-independent phosphoglycerate mutase (411 aa).

The protein belongs to the BPG-independent phosphoglycerate mutase family. A-PGAM subfamily.

The enzyme catalyses (2R)-2-phosphoglycerate = (2R)-3-phosphoglycerate. It functions in the pathway carbohydrate degradation; glycolysis; pyruvate from D-glyceraldehyde 3-phosphate: step 3/5. In terms of biological role, catalyzes the interconversion of 2-phosphoglycerate and 3-phosphoglycerate. The protein is 2,3-bisphosphoglycerate-independent phosphoglycerate mutase of Pyrobaculum calidifontis (strain DSM 21063 / JCM 11548 / VA1).